A 310-amino-acid polypeptide reads, in one-letter code: Transaldolase (310 aa).

Lys-124 serves as the catalytic Schiff-base intermediate with substrate.

Belongs to the transaldolase family. Type 1 subfamily. As to quaternary structure, homodimer.

It is found in the cytoplasm. It carries out the reaction D-sedoheptulose 7-phosphate + D-glyceraldehyde 3-phosphate = D-erythrose 4-phosphate + beta-D-fructose 6-phosphate. It participates in carbohydrate degradation; pentose phosphate pathway; D-glyceraldehyde 3-phosphate and beta-D-fructose 6-phosphate from D-ribose 5-phosphate and D-xylulose 5-phosphate (non-oxidative stage): step 2/3. Transaldolase is important for the balance of metabolites in the pentose-phosphate pathway. The protein is Transaldolase of Teredinibacter turnerae (strain ATCC 39867 / T7901).